The sequence spans 230 residues: Large ribosomal subunit protein uL1 (230 aa).

It belongs to the universal ribosomal protein uL1 family. In terms of assembly, part of the 50S ribosomal subunit.

In terms of biological role, binds directly to 23S rRNA. The L1 stalk is quite mobile in the ribosome, and is involved in E site tRNA release. Its function is as follows. Protein L1 is also a translational repressor protein, it controls the translation of the L11 operon by binding to its mRNA. This chain is Large ribosomal subunit protein uL1, found in Nitrobacter hamburgensis (strain DSM 10229 / NCIMB 13809 / X14).